Consider the following 404-residue polypeptide: Glucose-1-phosphate adenylyltransferase (404 aa).

Alpha-D-glucose 1-phosphate contacts are provided by residues Y99, G164, 179-180, and S197; that span reads EK.

It belongs to the bacterial/plant glucose-1-phosphate adenylyltransferase family.

It carries out the reaction alpha-D-glucose 1-phosphate + ATP + H(+) = ADP-alpha-D-glucose + diphosphate. It participates in glycan biosynthesis; glycogen biosynthesis. Functionally, involved in the biosynthesis of ADP-glucose, a building block, required in the biosynthesis of maltose-1-phosphate (M1P) and in the elongation reactions to produce linear alpha-1,4-glucans. Catalyzes the reaction between ATP and alpha-D-glucose 1-phosphate (G1P) to produce pyrophosphate and ADP-Glc. In Mycolicibacterium vanbaalenii (strain DSM 7251 / JCM 13017 / BCRC 16820 / KCTC 9966 / NRRL B-24157 / PYR-1) (Mycobacterium vanbaalenii), this protein is Glucose-1-phosphate adenylyltransferase.